Reading from the N-terminus, the 339-residue chain is tRNA-dihydrouridine(20/20a) synthase (339 aa).

FMN is bound by residues 26 to 28 (PML) and Q78. C108 (proton donor) is an active-site residue. FMN is bound by residues K147, H180, 220–222 (NGG), and 242–243 (GR).

Belongs to the Dus family. DusA subfamily. FMN serves as cofactor.

The catalysed reaction is 5,6-dihydrouridine(20) in tRNA + NADP(+) = uridine(20) in tRNA + NADPH + H(+). The enzyme catalyses 5,6-dihydrouridine(20) in tRNA + NAD(+) = uridine(20) in tRNA + NADH + H(+). It catalyses the reaction 5,6-dihydrouridine(20a) in tRNA + NADP(+) = uridine(20a) in tRNA + NADPH + H(+). It carries out the reaction 5,6-dihydrouridine(20a) in tRNA + NAD(+) = uridine(20a) in tRNA + NADH + H(+). Functionally, catalyzes the synthesis of 5,6-dihydrouridine (D), a modified base found in the D-loop of most tRNAs, via the reduction of the C5-C6 double bond in target uridines. Specifically modifies U20 and U20a in tRNAs. In Shigella flexneri, this protein is tRNA-dihydrouridine(20/20a) synthase.